Here is a 509-residue protein sequence, read N- to C-terminus: Thymus-specific serine protease (509 aa).

Residues 1 to 22 (MAVKAPWLGFLLLVSLWGLSTP) form the signal peptide. Residues Asn-69 and Asn-171 are each glycosylated (N-linked (GlcNAc...) asparagine). Ser-184 (charge relay system) is an active-site residue. Residue Asn-320 is glycosylated (N-linked (GlcNAc...) asparagine). Residues Asp-446 and His-471 each act as charge relay system in the active site.

Belongs to the peptidase S28 family. As to expression, expressed predominantly in cortical thymic epithelial cells, with highest expression around vessels and the thymic capsule.

It localises to the cytoplasmic vesicle. Protease that may play a role in T-cell development. The sequence is that of Thymus-specific serine protease (Prss16) from Mus musculus (Mouse).